The chain runs to 200 residues: Outer-membrane lipoprotein carrier protein (200 aa).

The signal sequence occupies residues 1–18 (MIGLFLAAPLVLSSAVWA).

This sequence belongs to the LolA family. In terms of assembly, monomer.

The protein localises to the periplasm. Participates in the translocation of lipoproteins from the inner membrane to the outer membrane. Only forms a complex with a lipoprotein if the residue after the N-terminal Cys is not an aspartate (The Asp acts as a targeting signal to indicate that the lipoprotein should stay in the inner membrane). The chain is Outer-membrane lipoprotein carrier protein from Photobacterium profundum (strain SS9).